The following is a 664-amino-acid chain: Serine/threonine-protein kinase PrkC (664 aa).

Topologically, residues 1–348 (MIGKIINERY…PKPKKKSTRK (348 aa)) are cytoplasmic. The region spanning 10 to 271 (YKIVDKLGGG…EMKDDLSSVL (262 aa)) is the Protein kinase domain. ATP contacts are provided by residues 16–24 (LGGGGMSTV) and Lys-39. The active-site Proton acceptor is Asp-133. Residues Thr-161, Thr-164, and Thr-166 each carry the phosphothreonine; by autocatalysis modification. The helical transmembrane segment at 349–369 (IVLLSLIFSLLMIALVSFVAM) threads the bilayer. Topologically, residues 370 to 664 (AMFGNKYEET…AEKEVSYDDV (295 aa)) are extracellular. 3 consecutive PASTA domains span residues 373 to 440 (GNKY…VISK), 441 to 509 (GPEK…YESL), and 510 to 575 (GIKQ…VVSK). A disordered region spans residues 541–565 (KEEYSDDIDEGDVISQSPKGKSVDE). The segment covering 554-565 (ISQSPKGKSVDE) has biased composition (polar residues).

This sequence belongs to the protein kinase superfamily. Ser/Thr protein kinase family. As to quaternary structure, homodimer.

The protein resides in the spore membrane. The catalysed reaction is L-seryl-[protein] + ATP = O-phospho-L-seryl-[protein] + ADP + H(+). The enzyme catalyses L-threonyl-[protein] + ATP = O-phospho-L-threonyl-[protein] + ADP + H(+). Functionally, probable protein kinase that is responsible for triggering spore germination in response to muropeptides, signaling bacteria to exit dormancy. PrkC is thus a germination receptor that binds peptidoglycan fragments containing either m-Dpm (meso-diaminopimelate) or L-lys, which act as spore germinants. Probably autophosphorylates and phosphorylates FusA (EF-G, elongation factor G); the latter modification is likely necessary for germination in response to peptidoglycan. The sequence is that of Serine/threonine-protein kinase PrkC (prkC) from Staphylococcus aureus (strain Newman).